A 937-amino-acid chain; its full sequence is Inactive tyrosine-protein kinase transmembrane receptor ROR1 (937 aa).

The N-terminal stretch at 1–29 (MHRPRRRGTRPPLLALLAALLLAARGAAA) is a signal peptide. The Extracellular segment spans residues 30 to 406 (QETELSVSAE…KEKNKMEILY (377 aa)). In terms of domain architecture, Ig-like C2-type spans 42–147 (PTSSWNISSE…EVVSSTGVLF (106 aa)). Residues Asn-47 and Asn-66 are each glycosylated (N-linked (GlcNAc...) asparagine). Intrachain disulfides connect Cys-79–Cys-131, Cys-170–Cys-235, Cys-178–Cys-228, Cys-219–Cys-260, Cys-248–Cys-296, Cys-252–Cys-282, Cys-313–Cys-391, Cys-334–Cys-374, and Cys-362–Cys-386. Positions 165 to 299 (EEDGFCQPYR…SPEAANCIRI (135 aa)) constitute an FZ domain. N-linked (GlcNAc...) asparagine glycosylation occurs at Asn-184. The Kringle domain occupies 312-391 (KCYNSTGVDY…KSDLCDIPAC (80 aa)). N-linked (GlcNAc...) asparagine glycosylation is present at Asn-315. The helical transmembrane segment at 407 to 427 (ILVPSVAIPLAIALLFFFICV) threads the bilayer. The Cytoplasmic portion of the chain corresponds to 428–937 (CRNNQKSSSA…HTESMISAEL (510 aa)). Residues 473–746 (VRFMEELGEC…PRFKDIHVRL (274 aa)) enclose the Protein kinase domain. ATP-binding positions include 479 to 487 (LGECAFGKI) and Lys-506. Tyr-645 carries the phosphotyrosine; by autocatalysis modification. Low complexity predominate over residues 753–762 (SSHTSSTTPS). Disordered regions lie at residues 753–779 (SSHT…SPVS) and 833–890 (AAHY…HMSI). The span at 763-779 (GGNATTQTTSLSASPVS) shows a compositional bias: polar residues. Over residues 854–864 (RSPSSASGSTS) the composition is skewed to low complexity. A compositionally biased stretch (polar residues) spans 865–880 (TGHVTSLPSSGSNQEA).

It belongs to the protein kinase superfamily. Tyr protein kinase family. ROR subfamily. Interacts with ERBB2 and IGFBP5. As to expression, expressed strongly in human heart, lung and kidney, but weakly in the CNS. Isoform Short is strongly expressed in fetal and adult CNS and in a variety of human cancers, including those originating from CNS or PNS neuroectoderm.

The protein resides in the membrane. Its subcellular location is the cell projection. The protein localises to the axon. Its function is as follows. Has very low kinase activity in vitro and is unlikely to function as a tyrosine kinase in vivo. Receptor for ligand WNT5A which activate downstream NFkB signaling pathway and may result in the inhibition of WNT3A-mediated signaling. In inner ear, crucial for spiral ganglion neurons to innervate auditory hair cells. Via IGFBP5 ligand, forms a complex with ERBB2 to enhance CREB oncogenic signaling. In Homo sapiens (Human), this protein is Inactive tyrosine-protein kinase transmembrane receptor ROR1 (ROR1).